The chain runs to 325 residues: Quinolinate synthase (325 aa).

Iminosuccinate contacts are provided by His41 and Ser58. Cys103 lines the [4Fe-4S] cluster pocket. Residues 129–131 (YIN) and Ser146 each bind iminosuccinate. A [4Fe-4S] cluster-binding site is contributed by Cys189. Iminosuccinate contacts are provided by residues 215 to 217 (HPE) and Thr232. Position 282 (Cys282) interacts with [4Fe-4S] cluster.

Belongs to the quinolinate synthase family. Type 2 subfamily. [4Fe-4S] cluster is required as a cofactor.

It is found in the cytoplasm. The catalysed reaction is iminosuccinate + dihydroxyacetone phosphate = quinolinate + phosphate + 2 H2O + H(+). Its pathway is cofactor biosynthesis; NAD(+) biosynthesis; quinolinate from iminoaspartate: step 1/1. Functionally, catalyzes the condensation of iminoaspartate with dihydroxyacetone phosphate to form quinolinate. This chain is Quinolinate synthase, found in Rippkaea orientalis (strain PCC 8801 / RF-1) (Cyanothece sp. (strain PCC 8801)).